A 227-amino-acid polypeptide reads, in one-letter code: Charged multivesicular body protein 4c (227 aa).

The interval 1 to 27 (MSKITKLFKSSGGSGSSSKNRKGPSAQ) is disordered. Coiled coils occupy residues 32–94 (KLRE…STIE) and 129–187 (LEKI…MANV). Residues 178–227 (EDLNSQMANVNLPSVPSSKLPSTKLPSRPASSRKKVEDDDDMQMLAAWAT) form a disordered region. Residues 189–206 (LPSVPSSKLPSTKLPSRP) show a composition bias toward low complexity.

The protein belongs to the SNF7 family. Probable core component of the endosomal sorting required for transport complex III (ESCRT-III). ESCRT-III components are thought to multimerize to form a flat lattice on the perimeter membrane of the endosome.

The protein localises to the cytoplasm. It localises to the cytosol. The protein resides in the late endosome membrane. Functionally, probable core component of the endosomal sorting required for transport complex III (ESCRT-III) which is involved in multivesicular bodies (MVBs) formation and sorting of endosomal cargo proteins into MVBs. MVBs contain intraluminal vesicles (ILVs) that are generated by invagination and scission from the limiting membrane of the endosome and mostly are delivered to lysosomes enabling degradation of membrane proteins, such as stimulated growth factor receptors, lysosomal enzymes and lipids. Key component of the cytokinesis checkpoint, a process required to delay abscission to prevent both premature resolution of intercellular chromosome bridges and accumulation of DNA damage. In Xenopus laevis (African clawed frog), this protein is Charged multivesicular body protein 4c (chmp4c).